Here is a 541-residue protein sequence, read N- to C-terminus: Chaperonin GroEL 2 (541 aa).

ATP contacts are provided by residues Thr-29 to Pro-32 and Asp-86 to Thr-90. Lys-132 is covalently cross-linked (Isoglutamyl lysine isopeptide (Lys-Gln) (interchain with Q-Cter in protein Pup)). ATP-binding positions include Gly-413, Asn-476 to Ala-478, and Asp-492.

Belongs to the chaperonin (HSP60) family. As to quaternary structure, forms a cylinder of 14 subunits composed of two heptameric rings stacked back-to-back. Interacts with the co-chaperonin GroES.

It is found in the secreted. It localises to the capsule. The protein localises to the cell surface. The protein resides in the cell wall. It carries out the reaction ATP + H2O + a folded polypeptide = ADP + phosphate + an unfolded polypeptide.. Together with its co-chaperonin GroES, plays an essential role in assisting protein folding. The GroEL-GroES system forms a nano-cage that allows encapsulation of the non-native substrate proteins and provides a physical environment optimized to promote and accelerate protein folding. The polypeptide is Chaperonin GroEL 2 (Mycolicibacterium smegmatis (strain ATCC 700084 / mc(2)155) (Mycobacterium smegmatis)).